The primary structure comprises 464 residues: MLSATLRLLSLCPPESRFAVTLTRMQAWPSPPIRSLPGHGKPLRIFDTATSSVRELAPAVTARLYVCGITPYDATHLGHAFTYLTYDLAQRVLRDAGHHVHYVQNVTDVDDPLLERATRDGLDWRALADREIDLFREDMTALRMLAPDAYVGVVEAIPMIVDMVVELVDRGAAYQVDDDLYFSIATAPAFGEISHLSRAEMLAICAERGGDPRRTGKKDPLDPLLWRAHRPGEPSWPSPFGPGRPGWHIECSAIARHYLGGVIDIQGGGTDLSFPHHECSAAHAEVAAGIRPFARSYVHTAMVSLDGHKMSKSRGNLEFVSRLRRAGVDPAALRLALLDHRHTEDWEWTPGLLDDAVDRMNRWRAAVALPTGPDAMGLLAAVRERLADDLDAPGAVAAVDAWVGAALADAGGSAGAGPDPTHQGGPVRGSGGDVPAWGEAPALVRRLVDTLLGVDLEPVRPRGS.

C67 lines the Zn(2+) pocket. L-cysteinyl-5'-AMP-binding positions include 67-70, T82, and 105-107; these read CGIT and NVT. The 'HIGH' region motif lies at 69 to 79; it reads ITPYDATHLGH. The 'ERGGDP' region motif lies at 207 to 212; it reads ERGGDP. Residue W247 coordinates L-cysteinyl-5'-AMP. Residue C251 coordinates Zn(2+). 269–271 contacts L-cysteinyl-5'-AMP; that stretch reads GTD. H276 is a binding site for Zn(2+). An L-cysteinyl-5'-AMP-binding site is contributed by V303. The 'KMSKS' region signature appears at 309-313; sequence KMSKS. The tract at residues 410-435 is disordered; that stretch reads AGGSAGAGPDPTHQGGPVRGSGGDVP.

This sequence belongs to the class-I aminoacyl-tRNA synthetase family. MshC subfamily. Monomer. Requires Zn(2+) as cofactor.

It catalyses the reaction 1D-myo-inositol 2-amino-2-deoxy-alpha-D-glucopyranoside + L-cysteine + ATP = 1D-myo-inositol 2-(L-cysteinylamino)-2-deoxy-alpha-D-glucopyranoside + AMP + diphosphate + H(+). In terms of biological role, catalyzes the ATP-dependent condensation of GlcN-Ins and L-cysteine to form L-Cys-GlcN-Ins. This chain is L-cysteine:1D-myo-inositol 2-amino-2-deoxy-alpha-D-glucopyranoside ligase, found in Frankia casuarinae (strain DSM 45818 / CECT 9043 / HFP020203 / CcI3).